The sequence spans 176 residues: Adenine phosphoribosyltransferase (176 aa).

The protein belongs to the purine/pyrimidine phosphoribosyltransferase family. In terms of assembly, homodimer.

The protein resides in the cytoplasm. It catalyses the reaction AMP + diphosphate = 5-phospho-alpha-D-ribose 1-diphosphate + adenine. Its pathway is purine metabolism; AMP biosynthesis via salvage pathway; AMP from adenine: step 1/1. In terms of biological role, catalyzes a salvage reaction resulting in the formation of AMP, that is energically less costly than de novo synthesis. This Leuconostoc mesenteroides subsp. mesenteroides (strain ATCC 8293 / DSM 20343 / BCRC 11652 / CCM 1803 / JCM 6124 / NCDO 523 / NBRC 100496 / NCIMB 8023 / NCTC 12954 / NRRL B-1118 / 37Y) protein is Adenine phosphoribosyltransferase.